Here is a 255-residue protein sequence, read N- to C-terminus: Large ribosomal subunit protein uL4 (255 aa).

The protein belongs to the universal ribosomal protein uL4 family. As to quaternary structure, part of the 50S ribosomal subunit.

Its function is as follows. One of the primary rRNA binding proteins, this protein initially binds near the 5'-end of the 23S rRNA. It is important during the early stages of 50S assembly. It makes multiple contacts with different domains of the 23S rRNA in the assembled 50S subunit and ribosome. In terms of biological role, forms part of the polypeptide exit tunnel. The protein is Large ribosomal subunit protein uL4 of Thermococcus onnurineus (strain NA1).